Consider the following 297-residue polypeptide: Diaminopimelate epimerase (297 aa).

The substrate site is built by asparagine 13, glutamine 46, and asparagine 66. Catalysis depends on cysteine 76, which acts as the Proton donor. Substrate contacts are provided by residues 77–78 (GN), asparagine 174, asparagine 207, and 225–226 (ER). Cysteine 234 serves as the catalytic Proton acceptor. A substrate-binding site is contributed by 235–236 (GT).

This sequence belongs to the diaminopimelate epimerase family. Homodimer.

The protein localises to the cytoplasm. It catalyses the reaction (2S,6S)-2,6-diaminopimelate = meso-2,6-diaminopimelate. The protein operates within amino-acid biosynthesis; L-lysine biosynthesis via DAP pathway; DL-2,6-diaminopimelate from LL-2,6-diaminopimelate: step 1/1. Catalyzes the stereoinversion of LL-2,6-diaminopimelate (L,L-DAP) to meso-diaminopimelate (meso-DAP), a precursor of L-lysine and an essential component of the bacterial peptidoglycan. The polypeptide is Diaminopimelate epimerase (Leptothrix cholodnii (strain ATCC 51168 / LMG 8142 / SP-6) (Leptothrix discophora (strain SP-6))).